The chain runs to 392 residues: Outer membrane protein assembly factor BamB (392 aa).

The first 19 residues, 1–19 (MQLRKLLLPGLLSVTLLSG), serve as a signal peptide directing secretion. Cysteine 20 is lipidated: N-palmitoyl cysteine. Cysteine 20 carries the S-diacylglycerol cysteine lipid modification.

The protein belongs to the BamB family. As to quaternary structure, part of the Bam complex, which is composed of the outer membrane protein BamA, and four lipoproteins BamB, BamC, BamD and BamE.

Its subcellular location is the cell outer membrane. Part of the outer membrane protein assembly complex, which is involved in assembly and insertion of beta-barrel proteins into the outer membrane. The chain is Outer membrane protein assembly factor BamB from Salmonella typhimurium (strain LT2 / SGSC1412 / ATCC 700720).